The primary structure comprises 728 residues: 1,4-alpha-glucan branching enzyme GlgB (728 aa).

Asp405 serves as the catalytic Nucleophile. Residue Glu458 is the Proton donor of the active site.

The protein belongs to the glycosyl hydrolase 13 family. GlgB subfamily. As to quaternary structure, monomer.

The catalysed reaction is Transfers a segment of a (1-&gt;4)-alpha-D-glucan chain to a primary hydroxy group in a similar glucan chain.. It participates in glycan biosynthesis; glycogen biosynthesis. Catalyzes the formation of the alpha-1,6-glucosidic linkages in glycogen by scission of a 1,4-alpha-linked oligosaccharide from growing alpha-1,4-glucan chains and the subsequent attachment of the oligosaccharide to the alpha-1,6 position. The chain is 1,4-alpha-glucan branching enzyme GlgB from Klebsiella pneumoniae subsp. pneumoniae (strain ATCC 700721 / MGH 78578).